The primary structure comprises 874 residues: Protein translocase subunit SecA (874 aa).

ATP contacts are provided by residues Q87, 105-109 (GEGKT), and D512. Zn(2+) is bound by residues C859, C861, C870, and H871.

The protein belongs to the SecA family. Monomer and homodimer. Part of the essential Sec protein translocation apparatus which comprises SecA, SecYEG and auxiliary proteins SecDF-YajC and YidC. Zn(2+) serves as cofactor.

Its subcellular location is the cell inner membrane. It localises to the cytoplasm. The catalysed reaction is ATP + H2O + cellular proteinSide 1 = ADP + phosphate + cellular proteinSide 2.. Its function is as follows. Part of the Sec protein translocase complex. Interacts with the SecYEG preprotein conducting channel. Has a central role in coupling the hydrolysis of ATP to the transfer of proteins into and across the cell membrane, serving both as a receptor for the preprotein-SecB complex and as an ATP-driven molecular motor driving the stepwise translocation of polypeptide chains across the membrane. This Buchnera aphidicola subsp. Schizaphis graminum (strain Sg) protein is Protein translocase subunit SecA.